Consider the following 222-residue polypeptide: Translation initiation factor 6 (222 aa).

This sequence belongs to the eIF-6 family.

Functionally, binds to the 50S ribosomal subunit and prevents its association with the 30S ribosomal subunit to form the 70S initiation complex. In Methanothermobacter thermautotrophicus (strain ATCC 29096 / DSM 1053 / JCM 10044 / NBRC 100330 / Delta H) (Methanobacterium thermoautotrophicum), this protein is Translation initiation factor 6.